Consider the following 185-residue polypeptide: Peptide methionine sulfoxide reductase MsrA (185 aa).

The active site involves Cys12.

This sequence belongs to the MsrA Met sulfoxide reductase family.

It carries out the reaction L-methionyl-[protein] + [thioredoxin]-disulfide + H2O = L-methionyl-(S)-S-oxide-[protein] + [thioredoxin]-dithiol. It catalyses the reaction [thioredoxin]-disulfide + L-methionine + H2O = L-methionine (S)-S-oxide + [thioredoxin]-dithiol. In terms of biological role, has an important function as a repair enzyme for proteins that have been inactivated by oxidation. Catalyzes the reversible oxidation-reduction of methionine sulfoxide in proteins to methionine. This is Peptide methionine sulfoxide reductase MsrA from Granulibacter bethesdensis (strain ATCC BAA-1260 / CGDNIH1).